We begin with the raw amino-acid sequence, 427 residues long: Enolase 2 (427 aa).

Position 163 (Q163) interacts with (2R)-2-phosphoglycerate. The active-site Proton donor is the E205. D242, E285, and D312 together coordinate Mg(2+). (2R)-2-phosphoglycerate contacts are provided by K337, R366, S367, and K388. The Proton acceptor role is filled by K337.

Belongs to the enolase family. Component of the RNA degradosome, a multiprotein complex involved in RNA processing and mRNA degradation. Mg(2+) serves as cofactor.

Its subcellular location is the cytoplasm. It is found in the secreted. It localises to the cell surface. It carries out the reaction (2R)-2-phosphoglycerate = phosphoenolpyruvate + H2O. Its pathway is carbohydrate degradation; glycolysis; pyruvate from D-glyceraldehyde 3-phosphate: step 4/5. Catalyzes the reversible conversion of 2-phosphoglycerate (2-PG) into phosphoenolpyruvate (PEP). It is essential for the degradation of carbohydrates via glycolysis. This is Enolase 2 from Methylococcus capsulatus (strain ATCC 33009 / NCIMB 11132 / Bath).